The primary structure comprises 629 residues: Replication protein A 70 kDa DNA-binding subunit D (629 aa).

The segment at 112-135 (LDSKSGEEEAREPKKQKLEHSPVS) is disordered. Over residues 115–131 (KSGEEEAREPKKQKLEH) the composition is skewed to basic and acidic residues. A DNA-binding region (OB) is located at residues 194–280 (WTIKVRVTNK…QNDYEMTLNE (87 aa)). Residues 492–512 (CKTCNKKVTEALDSGYWCEGC) form a C4-type zinc finger.

Belongs to the replication factor A protein 1 family. Heterotrimer of RPA1, RPA2 and RPA3 (canonical replication protein A complex).

It localises to the nucleus. Functionally, component of the replication protein A complex (RPA) required for DNA recombination, repair and replication. The activity of RPA is mediated by single-stranded DNA binding and protein interactions. Probably involved in repair of double-strand DNA breaks (DSBs) induced by genotoxic stresses. In Arabidopsis thaliana (Mouse-ear cress), this protein is Replication protein A 70 kDa DNA-binding subunit D (RPA1D).